The following is a 229-amino-acid chain: Potassium/proton antiporter CemA (229 aa).

3 helical membrane-spanning segments follow: residues Ala6–Cys26, Ile107–Gly127, and Ile189–Ile209.

This sequence belongs to the CemA family.

The protein resides in the plastid. Its subcellular location is the chloroplast inner membrane. It carries out the reaction K(+)(in) + H(+)(out) = K(+)(out) + H(+)(in). Its function is as follows. Contributes to K(+)/H(+) antiport activity by supporting proton efflux to control proton extrusion and homeostasis in chloroplasts in a light-dependent manner to modulate photosynthesis. Prevents excessive induction of non-photochemical quenching (NPQ) under continuous-light conditions. Indirectly promotes efficient inorganic carbon uptake into chloroplasts. The sequence is that of Potassium/proton antiporter CemA from Lepidium virginicum (Virginia pepperweed).